A 453-amino-acid polypeptide reads, in one-letter code: Putative sodium-coupled neutral amino acid transporter 11 (453 aa).

The span at 1-10 shows a compositional bias: polar residues; it reads MSYQQPQLSG. Residues 1 to 34 are disordered; it reads MSYQQPQLSGPLQRETDSSDRESLISGHEHGGKS. The span at 14 to 32 shows a compositional bias: basic and acidic residues; that stretch reads RETDSSDRESLISGHEHGG. The next 11 helical transmembrane spans lie at 39-59, 66-86, 106-126, 150-170, 179-199, 222-242, 262-282, 299-319, 337-357, 359-379, and 398-418; these read AVFNVVNSVIGSGIIGLPYSM, LGILLLFLVSYITDFSLVLLI, GFPGYLLLSTLQFMYPFIAMI, GWFISRHFIIVVSTVTCTLPL, LGKISFISTILTTVILGIVMT, AIQAIGVMSFAFICHHNCFLV, ILVSVFICVLFATCGYFTFTG, VTFGRFCYGITVILTYPIECF, VFHTVLAVLIVTAATLVSLMI, CLGIVLELNGVLCAAPLIFII, and IMACVMFPVGAVVMVVGFVMA. 2 N-linked (GlcNAc...) asparagine glycosylation sites follow: Asn438 and Asn443.

It belongs to the amino acid/polyamine transporter 2 family.

It is found in the membrane. Putative sodium-dependent amino acid/proton antiporter. This is Putative sodium-coupled neutral amino acid transporter 11 (Slc38a11) from Mus musculus (Mouse).